The sequence spans 573 residues: Phosphoenolpyruvate-protein phosphotransferase (573 aa).

His190 serves as the catalytic Tele-phosphohistidine intermediate. Phosphoenolpyruvate is bound by residues Arg297 and Arg333. Mg(2+)-binding residues include Glu432 and Asp456. Residues 455-456 (ND) and Arg466 each bind phosphoenolpyruvate. Cys503 serves as the catalytic Proton donor.

It belongs to the PEP-utilizing enzyme family. As to quaternary structure, homodimer. It depends on Mg(2+) as a cofactor.

It is found in the cytoplasm. The catalysed reaction is L-histidyl-[protein] + phosphoenolpyruvate = N(pros)-phospho-L-histidyl-[protein] + pyruvate. In terms of biological role, general (non sugar-specific) component of the phosphoenolpyruvate-dependent sugar phosphotransferase system (sugar PTS). This major carbohydrate active-transport system catalyzes the phosphorylation of incoming sugar substrates concomitantly with their translocation across the cell membrane. Enzyme I transfers the phosphoryl group from phosphoenolpyruvate (PEP) to the phosphoryl carrier protein (HPr). This Priestia megaterium (Bacillus megaterium) protein is Phosphoenolpyruvate-protein phosphotransferase (ptsI).